We begin with the raw amino-acid sequence, 481 residues long: Sialic acid-binding Ig-like lectin 16 (481 aa).

The N-terminal stretch at 1–16 (MLLLPLLLPVLGAGSL) is a signal peptide. Over 17–434 (NKDPSYSLQV…VHCKSGPMTG (418 aa)) the chain is Extracellular. The Ig-like V-type domain occupies 19–122 (DPSYSLQVQR…DEAWYFFRVE (104 aa)). 4 cysteine pairs are disulfide-bonded: C37-C174, C42-C102, C165-C216, and C259-C306. N-linked (GlcNAc...) asparagine glycosylation is found at N43 and N78. R120 provides a ligand contact to N-acetylneuraminate. 3 consecutive Ig-like C2-type domains span residues 147–232 (PDVY…RTVR), 238–322 (LELQ…LDLS), and 327–424 (PENL…LSFS). N-linked (GlcNAc...) asparagine glycans are attached at residues N338 and N347. A disulfide bridge connects residues C363 and C408. The chain crosses the membrane as a helical span at residues 435-455 (VVLVAVGEVAMKILLLCLCLI). The Cytoplasmic portion of the chain corresponds to 456–481 (LLRVRSCRRKAARAALGMEAADAVTD).

It belongs to the immunoglobulin superfamily. SIGLEC (sialic acid binding Ig-like lectin) family. In terms of tissue distribution, expressed in bone marrow, fetal brain, fetal liver, lung and salivary gland. Detected in brain, macrophage, cancerous esophagus and lung at protein level.

It is found in the membrane. Functionally, putative adhesion molecule that mediates sialic-acid dependent binding to cells. The polypeptide is Sialic acid-binding Ig-like lectin 16 (SIGLEC16) (Homo sapiens (Human)).